The chain runs to 1115 residues: Carbamoyl phosphate synthase large chain (1115 aa).

Residues 1 to 407 (MPRRTDLHHV…ALGKVMRSLE (407 aa)) form a carboxyphosphate synthetic domain region. Residues Arg134, Arg174, Gly180, Gly181, Glu213, Ile215, Glu220, Gly246, Val247, His248, Gln290, and Glu304 each coordinate ATP. One can recognise an ATP-grasp 1 domain in the interval 138–333 (KDIVAKAGGE…IAKIAAKLAI (196 aa)). Residues Gln290, Glu304, and Asn306 each coordinate Mg(2+). 3 residues coordinate Mn(2+): Gln290, Glu304, and Asn306. Residues 408–559 (TTRAGFWTAP…ELDPAAETEV (152 aa)) form an oligomerization domain region. The carbamoyl phosphate synthetic domain stretch occupies residues 560-965 (APQTERPKVL…AFAKSQTAAY (406 aa)). One can recognise an ATP-grasp 2 domain in the interval 693 to 884 (GDLLSAAGLP…LAKACARIML (192 aa)). ATP contacts are provided by Arg729, Arg768, Leu770, Glu775, Gly800, Ile801, His802, Ser803, Gln843, and Glu855. Positions 843, 855, and 857 each coordinate Mg(2+). Mn(2+)-binding residues include Gln843, Glu855, and Asn857. In terms of domain architecture, MGS-like spans 966–1113 (GSLPAQGTVF…QELHRVIGGV (148 aa)). The tract at residues 966–1115 (GSLPAQGTVF…LHRVIGGVER (150 aa)) is allosteric domain.

Belongs to the CarB family. As to quaternary structure, composed of two chains; the small (or glutamine) chain promotes the hydrolysis of glutamine to ammonia, which is used by the large (or ammonia) chain to synthesize carbamoyl phosphate. Tetramer of heterodimers (alpha,beta)4. Mg(2+) is required as a cofactor. Mn(2+) serves as cofactor.

It catalyses the reaction hydrogencarbonate + L-glutamine + 2 ATP + H2O = carbamoyl phosphate + L-glutamate + 2 ADP + phosphate + 2 H(+). It carries out the reaction hydrogencarbonate + NH4(+) + 2 ATP = carbamoyl phosphate + 2 ADP + phosphate + 2 H(+). It functions in the pathway amino-acid biosynthesis; L-arginine biosynthesis; carbamoyl phosphate from bicarbonate: step 1/1. The protein operates within pyrimidine metabolism; UMP biosynthesis via de novo pathway; (S)-dihydroorotate from bicarbonate: step 1/3. Functionally, large subunit of the glutamine-dependent carbamoyl phosphate synthetase (CPSase). CPSase catalyzes the formation of carbamoyl phosphate from the ammonia moiety of glutamine, carbonate, and phosphate donated by ATP, constituting the first step of 2 biosynthetic pathways, one leading to arginine and/or urea and the other to pyrimidine nucleotides. The large subunit (synthetase) binds the substrates ammonia (free or transferred from glutamine from the small subunit), hydrogencarbonate and ATP and carries out an ATP-coupled ligase reaction, activating hydrogencarbonate by forming carboxy phosphate which reacts with ammonia to form carbamoyl phosphate. The protein is Carbamoyl phosphate synthase large chain of Mycobacterium tuberculosis (strain CDC 1551 / Oshkosh).